A 218-amino-acid chain; its full sequence is DNA endonuclease I-ChuI (218 aa).

Belongs to the LAGLIDADG endonuclease family.

It is found in the plastid. The protein localises to the chloroplast. Probable endonuclease involved in intron homing. Encoded in the group-I intron of the subunit rRNA-encoding gene (rrnL), it generates a staggered cut with 4-nt (CTCG) 3'-OH overhangs 2 bp downstream from the intron insertion site. In Chlamydomonas applanata (Chlamydomonas humicola), this protein is DNA endonuclease I-ChuI.